The following is a 1152-amino-acid chain: ATP-dependent helicase/deoxyribonuclease subunit B (1152 aa).

In terms of domain architecture, UvrD-like helicase ATP-binding spans 1–338; sequence MSIRFIYGRA…LVRDRNYRFR (338 aa). 8-15 lines the ATP pocket; the sequence is GRAGSGKS. The UvrD-like helicase C-terminal domain maps to 276–579; that stretch reads PYRFKNSEEL…NVGDIARIKG (304 aa). 4 residues coordinate [4Fe-4S] cluster: Cys785, Cys1106, Cys1109, and Cys1115.

It belongs to the helicase family. AddB/RexB type 1 subfamily. As to quaternary structure, heterodimer of AddA and AddB. Requires Mg(2+) as cofactor. The cofactor is [4Fe-4S] cluster.

In terms of biological role, the heterodimer acts as both an ATP-dependent DNA helicase and an ATP-dependent, dual-direction single-stranded exonuclease. Recognizes the chi site generating a DNA molecule suitable for the initiation of homologous recombination. The AddB subunit has 5' -&gt; 3' nuclease activity but not helicase activity. This Clostridium botulinum (strain Alaska E43 / Type E3) protein is ATP-dependent helicase/deoxyribonuclease subunit B.